Here is a 655-residue protein sequence, read N- to C-terminus: p-hydroxybenzoic acid efflux pump subunit AaeB (655 aa).

11 consecutive transmembrane segments (helical) span residues 13 to 33 (FAVKLACAIVLALFIGFHFQL), 38 to 58 (WAVLTAAIVAAGPAFAAGGEP), 69 to 89 (LRIIGTFIGCIAALIIIISMI), 93 to 113 (LLMILVCCVWAGFCTWISSLV), 121 to 141 (WGLSGYTALIIVITIQTEPLL), 152 to 172 (EIVIGIGCAILADLLFSPRSI), 370 to 390 (LFWLWTGWTSGNGAMVMIAVV), 407 to 427 (FIYGTLAALPLGLLYFLVIIP), 431 to 451 (QSMLLLCLSLAVLGFFIGIEV), 459 to 479 (MGALASTINIIVLDNPMTFHF), and 482 to 502 (FLDSALGQIVGCMLAFIVILL).

This sequence belongs to the aromatic acid exporter ArAE (TC 2.A.85) family.

It localises to the cell inner membrane. Its function is as follows. Forms an efflux pump with AaeA. Could function as a metabolic relief valve, allowing to eliminate certain compounds when they accumulate to high levels in the cell. The protein is p-hydroxybenzoic acid efflux pump subunit AaeB of Salmonella dublin (strain CT_02021853).